Here is a 76-residue protein sequence, read N- to C-terminus: Acyl carrier protein (76 aa).

Residues 1 to 76 enclose the Carrier domain; the sequence is MSIEERVKKI…SAIDYVQNNQ (76 aa). Serine 36 is modified (O-(pantetheine 4'-phosphoryl)serine).

Belongs to the acyl carrier protein (ACP) family. Post-translationally, 4'-phosphopantetheine is transferred from CoA to a specific serine of apo-ACP by AcpS. This modification is essential for activity because fatty acids are bound in thioester linkage to the sulfhydryl of the prosthetic group.

Its subcellular location is the cytoplasm. It participates in lipid metabolism; fatty acid biosynthesis. Carrier of the growing fatty acid chain in fatty acid biosynthesis. This chain is Acyl carrier protein, found in Pasteurella multocida (strain Pm70).